A 418-amino-acid chain; its full sequence is Sterigmatocystin 8-O-methyltransferase (418 aa).

Positions 1-41 are excised as a propeptide; the sequence is MTLPNKAALVGLAHTLSEQVKRYLVTADETKSPEDHKLCIE. 170-176 contacts substrate; it reads MRSAAYF. A substrate binding region spans residues 206-225; the sequence is LFDYYSTVDEVRGRRFDLGM. S-adenosyl-L-methionine-binding positions include 254 to 255, Asp-277, 297 to 298, and Arg-313; these read GG and DI. His-317 acts as the Proton acceptor in catalysis.

This sequence belongs to the class I-like SAM-binding methyltransferase superfamily. Cation-independent O-methyltransferase family. COMT subfamily.

It catalyses the reaction sterigmatocystin + S-adenosyl-L-methionine = 8-O-methylsterigmatocystin + S-adenosyl-L-homocysteine + H(+). The catalysed reaction is dihydrosterigmatocystin + S-adenosyl-L-methionine = 8-O-methyldihydrosterigmatocystin + S-adenosyl-L-homocysteine + H(+). Its pathway is mycotoxin biosynthesis; aflatoxin biosynthesis. Functionally, involved in the conversion of sterigmatocystin to O-methylsterigmatocystin (OMST) and dihydrosterigmatocystin to dihydro-o-methylsterigmatocystin in the aflatoxin biosynthesis pathway. The protein is Sterigmatocystin 8-O-methyltransferase (omtA) of Aspergillus flavus (strain ATCC 200026 / FGSC A1120 / IAM 13836 / NRRL 3357 / JCM 12722 / SRRC 167).